The chain runs to 295 residues: METSMPEYYEVFGEFRGVLMDKRFTKYWEDVEMFLARPDDLVIATYPKSGTTWISEVVYMIYKEGDVEKCKEDAIFNRIPYLECRNEDLINGIKQLKEKESPRIVKTHLPPKLLPASFWEKNCKMIYLCRNAKDVAVSYYYFLLMITSYPNPKSFSEFVEKFMQGQVPYGSWYDHVKAWWEKSKNSRVLFMFYEDMKEDIRREVVKLIEFLERKPSAELVDRIIQHTSFQEMKNNPSTNYTMMPEEMMNQKVSPFMRKGIIGDWKNHFPEALRERFDEHYKQQMKDCTVKFRMEL.

48–53 (KSGTTW) is a 3'-phosphoadenylyl sulfate binding site. 106-108 (KTH) is a substrate binding site. Histidine 108 functions as the Proton acceptor in the catalytic mechanism. 3'-phosphoadenylyl sulfate contacts are provided by arginine 130 and serine 138. A Phosphoserine modification is found at serine 156. 3'-phosphoadenylyl sulfate-binding positions include tyrosine 193, 227 to 232 (TSFQEM), and 257 to 259 (RKG).

Belongs to the sulfotransferase 1 family. Homodimer. As to expression, testis and at very low level in the placenta.

It is found in the cytoplasm. The protein resides in the cytosol. It carries out the reaction estrone + 3'-phosphoadenylyl sulfate = estrone 3-sulfate + adenosine 3',5'-bisphosphate + H(+). It catalyses the reaction 17beta-estradiol + 3'-phosphoadenylyl sulfate = 17beta-estradiol 3-sulfate + adenosine 3',5'-bisphosphate + H(+). The catalysed reaction is (24S)-hydroxycholesterol + 3'-phosphoadenylyl sulfate = (24S)-hydroxycholesterol 3-sulfate + adenosine 3',5'-bisphosphate + H(+). The enzyme catalyses 3beta-hydroxyandrost-5-en-17-one + 3'-phosphoadenylyl sulfate = dehydroepiandrosterone 3-sulfate + adenosine 3',5'-bisphosphate + H(+). It carries out the reaction 4-ethylphenol + 3'-phosphoadenylyl sulfate = 4-ethylphenyl sulfate + adenosine 3',5'-bisphosphate + H(+). With respect to regulation, inhibited by estradiol. In terms of biological role, sulfotransferase that utilizes 3'-phospho-5'-adenylyl sulfate (PAPS) as sulfonate donor to catalyze the sulfate conjugation of estradiol and estrone. Is a key enzyme in estrogen homeostasis, the sulfation of estrogens leads to their inactivation. Also sulfates dehydroepiandrosterone, pregnenolone, (24S)-hydroxycholesterol and xenobiotic compounds like ethinylestradiol, equalenin, diethyl stilbesterol and 1-naphthol at significantly lower efficiency. Does not sulfonate cortisol, testosterone and dopamine. May play a role in gut microbiota-host metabolic interaction. O-sulfonates 4-ethylphenol (4-EP), a dietary tyrosine-derived metabolite produced by gut bacteria. The product 4-EPS crosses the blood-brain barrier and may negatively regulate oligodendrocyte maturation and myelination, affecting the functional connectivity of different brain regions associated with the limbic system. This is Sulfotransferase 1E1 (Sult1e1) from Mus musculus (Mouse).